Consider the following 252-residue polypeptide: Uracil-DNA glycosylase (252 aa).

The active-site Proton acceptor is the aspartate 78.

The protein belongs to the uracil-DNA glycosylase (UDG) superfamily. UNG family.

It localises to the cytoplasm. It catalyses the reaction Hydrolyzes single-stranded DNA or mismatched double-stranded DNA and polynucleotides, releasing free uracil.. Functionally, excises uracil residues from the DNA which can arise as a result of misincorporation of dUMP residues by DNA polymerase or due to deamination of cytosine. In Bordetella avium (strain 197N), this protein is Uracil-DNA glycosylase.